The chain runs to 316 residues: 4-hydroxy-3-methylbut-2-enyl diphosphate reductase (316 aa).

Position 12 (cysteine 12) interacts with [4Fe-4S] cluster. 2 residues coordinate (2E)-4-hydroxy-3-methylbut-2-enyl diphosphate: histidine 43 and histidine 81. Positions 43 and 81 each coordinate dimethylallyl diphosphate. Positions 43 and 81 each coordinate isopentenyl diphosphate. Cysteine 103 lines the [4Fe-4S] cluster pocket. Histidine 131 contributes to the (2E)-4-hydroxy-3-methylbut-2-enyl diphosphate binding site. A dimethylallyl diphosphate-binding site is contributed by histidine 131. Histidine 131 contacts isopentenyl diphosphate. Glutamate 133 functions as the Proton donor in the catalytic mechanism. Threonine 170 is a (2E)-4-hydroxy-3-methylbut-2-enyl diphosphate binding site. Cysteine 198 contacts [4Fe-4S] cluster. Residues serine 226, asparagine 228, and serine 271 each coordinate (2E)-4-hydroxy-3-methylbut-2-enyl diphosphate. Dimethylallyl diphosphate contacts are provided by serine 226, asparagine 228, and serine 271. Positions 226, 228, and 271 each coordinate isopentenyl diphosphate.

The protein belongs to the IspH family. [4Fe-4S] cluster serves as cofactor.

The enzyme catalyses isopentenyl diphosphate + 2 oxidized [2Fe-2S]-[ferredoxin] + H2O = (2E)-4-hydroxy-3-methylbut-2-enyl diphosphate + 2 reduced [2Fe-2S]-[ferredoxin] + 2 H(+). It catalyses the reaction dimethylallyl diphosphate + 2 oxidized [2Fe-2S]-[ferredoxin] + H2O = (2E)-4-hydroxy-3-methylbut-2-enyl diphosphate + 2 reduced [2Fe-2S]-[ferredoxin] + 2 H(+). The protein operates within isoprenoid biosynthesis; dimethylallyl diphosphate biosynthesis; dimethylallyl diphosphate from (2E)-4-hydroxy-3-methylbutenyl diphosphate: step 1/1. It functions in the pathway isoprenoid biosynthesis; isopentenyl diphosphate biosynthesis via DXP pathway; isopentenyl diphosphate from 1-deoxy-D-xylulose 5-phosphate: step 6/6. Its function is as follows. Catalyzes the conversion of 1-hydroxy-2-methyl-2-(E)-butenyl 4-diphosphate (HMBPP) into a mixture of isopentenyl diphosphate (IPP) and dimethylallyl diphosphate (DMAPP). Acts in the terminal step of the DOXP/MEP pathway for isoprenoid precursor biosynthesis. This is 4-hydroxy-3-methylbut-2-enyl diphosphate reductase from Bacillus anthracis (strain A0248).